A 500-amino-acid polypeptide reads, in one-letter code: NAD(P)H-quinone oxidoreductase chain 4, chloroplastic (500 aa).

14 helical membrane passes run 4 to 24, 37 to 57, 87 to 107, 111 to 131, 134 to 154, 167 to 187, 208 to 228, 242 to 262, 272 to 292, 305 to 325, 330 to 350, 386 to 406, 416 to 436, and 462 to 482; these read FPWL…IFLL, LCIC…HFQL, IGPI…AWPV, AQLF…SFSS, LLLF…LLSM, FILY…GIGL, ALEV…LPII, HYST…YGLV, AHCL…IYAA, IAYS…SLSD, GAIL…FLAG, LALP…GIIT, ILIA…SLSM, and LFVS…PDFV.

The protein belongs to the complex I subunit 4 family.

Its subcellular location is the plastid. It is found in the chloroplast thylakoid membrane. The enzyme catalyses a plastoquinone + NADH + (n+1) H(+)(in) = a plastoquinol + NAD(+) + n H(+)(out). It carries out the reaction a plastoquinone + NADPH + (n+1) H(+)(in) = a plastoquinol + NADP(+) + n H(+)(out). The chain is NAD(P)H-quinone oxidoreductase chain 4, chloroplastic from Oenothera biennis (German evening primrose).